Consider the following 135-residue polypeptide: MRILGIDVGNKTIGVALSDPLGFTAQGITTIRRKNEEEDIKELKELCEKYEVDTIVCGLPKNMNGTIGFQSEKVLGFCEVIKQNINVPIKMWDERLTTVTANRAMLEADLSRKKRKKLVDKVAATYILQGYLNSI.

The protein belongs to the YqgF nuclease family.

It is found in the cytoplasm. In terms of biological role, could be a nuclease involved in processing of the 5'-end of pre-16S rRNA. This Clostridium acetobutylicum (strain ATCC 824 / DSM 792 / JCM 1419 / IAM 19013 / LMG 5710 / NBRC 13948 / NRRL B-527 / VKM B-1787 / 2291 / W) protein is Putative pre-16S rRNA nuclease.